Here is a 272-residue protein sequence, read N- to C-terminus: METYAVFGNPIAHSKSPFIHQQFAQQLNIEHPYGRVLAPINDFINTLNAFFRAGGKGANVTVPFKEEAFARADELTERAALAGAVNTLKRLEDGRLLGDNTDGIGLLSDLERLSFIRPGLRILLIGAGGASRGVLLPLLSLDCAVTITNRTVSRAEELAKLFAHTGSIQALGMDELEGHEFDLIINATSSGISGDIPAIPSSLIHPGIYCYDMFYQKGKTPFLAWCEQRGSKRNADGLGMLVAQAAHAFLLWHGVLPDVEPVIKQLQEELSA.

Shikimate is bound by residues 14 to 16 (SKS) and threonine 61. The active-site Proton acceptor is lysine 65. Glutamate 77 lines the NADP(+) pocket. Residues asparagine 86 and aspartate 102 each contribute to the shikimate site. NADP(+) contacts are provided by residues 126 to 130 (GAGGA), 149 to 154 (NRTVSR), and methionine 213. Tyrosine 215 is a binding site for shikimate. An NADP(+)-binding site is contributed by glycine 237.

The protein belongs to the shikimate dehydrogenase family. In terms of assembly, homodimer.

It catalyses the reaction shikimate + NADP(+) = 3-dehydroshikimate + NADPH + H(+). It functions in the pathway metabolic intermediate biosynthesis; chorismate biosynthesis; chorismate from D-erythrose 4-phosphate and phosphoenolpyruvate: step 4/7. In terms of biological role, involved in the biosynthesis of the chorismate, which leads to the biosynthesis of aromatic amino acids. Catalyzes the reversible NADPH linked reduction of 3-dehydroshikimate (DHSA) to yield shikimate (SA). This chain is Shikimate dehydrogenase (NADP(+)), found in Escherichia coli O139:H28 (strain E24377A / ETEC).